A 245-amino-acid polypeptide reads, in one-letter code: Bis(5'-nucleosyl)-tetraphosphatase PrpE [asymmetrical] (245 aa).

The protein belongs to the PrpE family. Ni(2+) is required as a cofactor.

The enzyme catalyses P(1),P(4)-bis(5'-guanosyl) tetraphosphate + H2O = GMP + GTP + 2 H(+). Its function is as follows. Asymmetrically hydrolyzes Ap4p to yield AMP and ATP. The chain is Bis(5'-nucleosyl)-tetraphosphatase PrpE [asymmetrical] from Geobacillus sp. (strain WCH70).